Here is a 250-residue protein sequence, read N- to C-terminus: Triosephosphate isomerase (250 aa).

Asn-9–Lys-11 lines the substrate pocket. The active-site Electrophile is His-96. Residue Glu-168 is the Proton acceptor of the active site. Substrate-binding positions include Gly-174, Ser-216, and Gly-237–Gly-238.

It belongs to the triosephosphate isomerase family. Homodimer.

The protein resides in the cytoplasm. The catalysed reaction is D-glyceraldehyde 3-phosphate = dihydroxyacetone phosphate. Its pathway is carbohydrate biosynthesis; gluconeogenesis. It functions in the pathway carbohydrate degradation; glycolysis; D-glyceraldehyde 3-phosphate from glycerone phosphate: step 1/1. In terms of biological role, involved in the gluconeogenesis. Catalyzes stereospecifically the conversion of dihydroxyacetone phosphate (DHAP) to D-glyceraldehyde-3-phosphate (G3P). In Leptospira borgpetersenii serovar Hardjo-bovis (strain JB197), this protein is Triosephosphate isomerase.